The primary structure comprises 188 residues: GTP cyclohydrolase 1 (188 aa).

Positions 73, 76, and 144 each coordinate Zn(2+).

This sequence belongs to the GTP cyclohydrolase I family. In terms of assembly, homomer.

The catalysed reaction is GTP + H2O = 7,8-dihydroneopterin 3'-triphosphate + formate + H(+). The protein operates within cofactor biosynthesis; 7,8-dihydroneopterin triphosphate biosynthesis; 7,8-dihydroneopterin triphosphate from GTP: step 1/1. The chain is GTP cyclohydrolase 1 from Caldivirga maquilingensis (strain ATCC 700844 / DSM 13496 / JCM 10307 / IC-167).